We begin with the raw amino-acid sequence, 166 residues long: Regulatory protein RecX (166 aa).

The protein belongs to the RecX family.

It is found in the cytoplasm. In terms of biological role, modulates RecA activity. This chain is Regulatory protein RecX, found in Shigella sonnei (strain Ss046).